We begin with the raw amino-acid sequence, 193 residues long: Potassium-transporting ATPase KdpC subunit (193 aa).

Residues 7–27 (PLVVIFVVLTAVTGLAYPAVM) form a helical membrane-spanning segment.

It belongs to the KdpC family. The system is composed of three essential subunits: KdpA, KdpB and KdpC.

Its subcellular location is the cell inner membrane. Its function is as follows. Part of the high-affinity ATP-driven potassium transport (or Kdp) system, which catalyzes the hydrolysis of ATP coupled with the electrogenic transport of potassium into the cytoplasm. This subunit acts as a catalytic chaperone that increases the ATP-binding affinity of the ATP-hydrolyzing subunit KdpB by the formation of a transient KdpB/KdpC/ATP ternary complex. In Burkholderia ambifaria (strain ATCC BAA-244 / DSM 16087 / CCUG 44356 / LMG 19182 / AMMD) (Burkholderia cepacia (strain AMMD)), this protein is Potassium-transporting ATPase KdpC subunit.